We begin with the raw amino-acid sequence, 883 residues long: Phosphoenolpyruvate carboxylase (883 aa).

Residues H138 and K546 contribute to the active site.

It belongs to the PEPCase type 1 family. Mg(2+) serves as cofactor.

The enzyme catalyses oxaloacetate + phosphate = phosphoenolpyruvate + hydrogencarbonate. Functionally, forms oxaloacetate, a four-carbon dicarboxylic acid source for the tricarboxylic acid cycle. The protein is Phosphoenolpyruvate carboxylase of Salmonella choleraesuis (strain SC-B67).